Consider the following 504-residue polypeptide: Cobyric acid synthase (504 aa).

The GATase cobBQ-type domain occupies 258 to 454 (EIEIAIIKLP…LHGIFENDEW (197 aa)). The active-site Nucleophile is the Cys-339. Residue His-446 is part of the active site.

This sequence belongs to the CobB/CobQ family. CobQ subfamily.

It participates in cofactor biosynthesis; adenosylcobalamin biosynthesis. Its function is as follows. Catalyzes amidations at positions B, D, E, and G on adenosylcobyrinic A,C-diamide. NH(2) groups are provided by glutamine, and one molecule of ATP is hydrogenolyzed for each amidation. This Prochlorococcus marinus (strain NATL2A) protein is Cobyric acid synthase.